Here is a 100-residue protein sequence, read N- to C-terminus: Small ribosomal subunit protein uS17 (100 aa).

Belongs to the universal ribosomal protein uS17 family. Part of the 30S ribosomal subunit.

Functionally, one of the primary rRNA binding proteins, it binds specifically to the 5'-end of 16S ribosomal RNA. In Erythrobacter litoralis (strain HTCC2594), this protein is Small ribosomal subunit protein uS17.